A 170-amino-acid chain; its full sequence is Putative pre-16S rRNA nuclease (170 aa).

Over residues Met-1–Arg-18 the composition is skewed to basic and acidic residues. Positions Met-1 to Ile-22 are disordered.

It belongs to the YqgF nuclease family.

It is found in the cytoplasm. Its function is as follows. Could be a nuclease involved in processing of the 5'-end of pre-16S rRNA. In Mycolicibacterium smegmatis (strain ATCC 700084 / mc(2)155) (Mycobacterium smegmatis), this protein is Putative pre-16S rRNA nuclease.